The sequence spans 562 residues: Dihydroxy-acid dehydratase 2 (562 aa).

Cysteine 50 contributes to the [2Fe-2S] cluster binding site. Aspartate 82 provides a ligand contact to Mg(2+). Residue cysteine 123 coordinates [2Fe-2S] cluster. Positions 124, 125, and 447 each coordinate Mg(2+). N6-carboxylysine is present on lysine 125. The Proton acceptor role is filled by serine 473.

Belongs to the IlvD/Edd family. In terms of assembly, homodimer. It depends on [2Fe-2S] cluster as a cofactor. The cofactor is Mg(2+).

It catalyses the reaction (2R)-2,3-dihydroxy-3-methylbutanoate = 3-methyl-2-oxobutanoate + H2O. It carries out the reaction (2R,3R)-2,3-dihydroxy-3-methylpentanoate = (S)-3-methyl-2-oxopentanoate + H2O. The protein operates within amino-acid biosynthesis; L-isoleucine biosynthesis; L-isoleucine from 2-oxobutanoate: step 3/4. It participates in amino-acid biosynthesis; L-valine biosynthesis; L-valine from pyruvate: step 3/4. Functions in the biosynthesis of branched-chain amino acids. Catalyzes the dehydration of (2R,3R)-2,3-dihydroxy-3-methylpentanoate (2,3-dihydroxy-3-methylvalerate) into 2-oxo-3-methylpentanoate (2-oxo-3-methylvalerate) and of (2R)-2,3-dihydroxy-3-methylbutanoate (2,3-dihydroxyisovalerate) into 2-oxo-3-methylbutanoate (2-oxoisovalerate), the penultimate precursor to L-isoleucine and L-valine, respectively. This is Dihydroxy-acid dehydratase 2 from Bordetella pertussis (strain Tohama I / ATCC BAA-589 / NCTC 13251).